An 805-amino-acid chain; its full sequence is MPNQGEDCYFFFYSTCTKGDSCPFRHCEAALGNETVCTLWQEGRCFRRVCRFRHMEIDKKRSEIPCYWENQPTGCQKLNCVFHHNRGRYVDGLFLPPSKSVLPTVPESPEEEVKASQLSVQQNKLSVQSNTSPQLRSVMKVESSENVPSPKHPPVVINAADDDEDDDDQFSEEGDETKTPTLQPTPEVHNGLRVTSVRKPAVNIKQGECLHFGIKTLEEIKSKKMKEKSEEQGEGSSGVSSLLLHPEPVPGPEKENVRTVVRTVTLSTKQGEEPLVRLGLTETLGKRKFSTGGDSDPPLKRSLAQRLGKKVEAPETNTDETPKKAQVSKSLKERLGMSADPNNEDATDKVNKVGEIHVKTLEEMLLERASQKHGESQTKLKTEGPSKTDDSTSGARSSSTIRIKTFSEVLAEEEHRQQEAERQKSKKDTTCIKLKTDSEIKKTVVLPPIVASKGQSEEPAGKTKSMQEVHMKTVEEIKLEKALRVQQSSESSTSSPSQHEATPGARLLLRITKRTWRKEEKKLQEGNEVDFLSRVRMEATEASVETTGVDITKIQVKRCEIMRETRMQKQQEREKSVLTPLQGDVASCNTQVAEKPVLTAVPGITWHLTKQLPTKSSQKVEVETSGIADSLLNVKWSAQTLEKRGEAKPTVNVKQSVVKVVSSPKLAPKRKAVEMHPAVTAAVKPLSSSSVLQEPPAKKAAVDAVVLLDSEDKSVTVPEAENPRDSLVLPPTQSSSDSSPPEVSGPSSSQMSMKTRRLSSASTGKPPLSVEDDFEKLTWEISGGKLEAEIDLDPGKDEDDLPLEL.

2 C3H1-type zinc fingers span residues 2-29 (PNQGEDCYFFFYSTCTKGDSCPFRHCEA) and 31-57 (LGNETVCTLWQEGRCFRRVCRFRHMEI). Disordered stretches follow at residues 140 to 194 (KVES…GLRV), 223 to 351 (KKMK…DKVN), 364 to 433 (MLLE…TCIK), 449 to 468 (IVASKGQSEEPAGKTKSMQE), 481 to 506 (KALRVQQSSESSTSSPSQHEATPGAR), and 715 to 805 (VTVP…PLEL). Positions 160–175 (ADDDEDDDDQFSEEGD) are enriched in acidic residues. The span at 364–390 (MLLERASQKHGESQTKLKTEGPSKTDD) shows a compositional bias: basic and acidic residues. The span at 391-402 (STSGARSSSTIR) shows a compositional bias: polar residues. Residues 403–423 (IKTFSEVLAEEEHRQQEAERQ) are a coiled coil. Basic and acidic residues-rich tracts occupy residues 412 to 433 (EEEHRQQEAERQKSKKDTTCIK) and 455 to 468 (QSEEPAGKTKSMQE). 2 stretches are compositionally biased toward low complexity: residues 486 to 498 (QQSSESSTSSPSQ) and 730 to 749 (PPTQSSSDSSPPEVSGPSSS). Positions 750-763 (QMSMKTRRLSSAST) are enriched in polar residues. Positions 789–805 (EIDLDPGKDEDDLPLEL) are enriched in acidic residues.

May play a role in mRNA transport. In Homo sapiens (Human), this protein is Zinc finger CCCH domain-containing protein 11B.